A 153-amino-acid chain; its full sequence is Cofilin (153 aa).

Positions 4–148 constitute an ADF-H domain; that stretch reads SGATVSQDCI…EYDSILKTVS (145 aa).

This sequence belongs to the actin-binding proteins ADF family.

The protein localises to the cytoplasm. It is found in the cytoskeleton. Its subcellular location is the nucleus matrix. Its function is as follows. Controls reversibly actin polymerization and depolymerization in a pH-sensitive manner. It has the ability to bind G- and F-actin in a 1:1 ratio of cofilin to actin. Binding to F-actin is regulated by tropomyosin. It is the major component of intranuclear and cytoplasmic actin rods. Required for accumulation of actin at the cell division site via depolymerizing actin at the cell ends. In association with myosin II has a role in the assembly of the contractile ring via severing actin filaments. Involved in the maintenance of the contractile ring once formed. In association with profilin and capping protein, has a role in the mitotic reorganization of the actin cytoskeleton. The chain is Cofilin (COF1) from Gibberella zeae (strain ATCC MYA-4620 / CBS 123657 / FGSC 9075 / NRRL 31084 / PH-1) (Wheat head blight fungus).